The sequence spans 386 residues: Alpha-D-kanosaminyltransferase (386 aa).

Belongs to the glycosyltransferase group 1 family.

It catalyses the reaction 2'-deamino-2'-hydroxyneamine + UDP-alpha-D-kanosamine = kanamycin A + UDP + H(+). The catalysed reaction is neamine + UDP-alpha-D-kanosamine = kanamycin B + UDP + H(+). The enzyme catalyses paromamine + UDP-alpha-D-kanosamine = kanamycin C + UDP + H(+). It carries out the reaction 2'-deamino-2'-hydroxyparomamine + UDP-alpha-D-kanosamine = kanamycin X + UDP + H(+). It participates in antibiotic biosynthesis; kanamycin biosynthesis. Functionally, glycosyltransferase involved in the biosynthesis of kanamycins by catalyzing the transfer of the hexose kanosamine from UDP-alpha-D-kanosamine to disaccharide precursors. Can also use UDP-alpha-D-glucose as sugar donor with much lower efficiency. This is Alpha-D-kanosaminyltransferase (kanE) from Streptomyces kanamyceticus.